The chain runs to 94 residues: MAVLSNDQVDAALPNLPGWERAAGALRRSVKFPTFLDGIDAVRRVAEFAEEKDHHPDIDIRWRTVTFALVTHAAGGITEKDVQMAEEINRILSD.

It belongs to the pterin-4-alpha-carbinolamine dehydratase family.

It catalyses the reaction (4aS,6R)-4a-hydroxy-L-erythro-5,6,7,8-tetrahydrobiopterin = (6R)-L-erythro-6,7-dihydrobiopterin + H2O. The sequence is that of Putative pterin-4-alpha-carbinolamine dehydratase from Mycolicibacterium smegmatis (strain ATCC 700084 / mc(2)155) (Mycobacterium smegmatis).